The chain runs to 633 residues: Chitinase 2 (633 aa).

One can recognise a GH18 domain in the interval 151 to 602 (PKLSAYITDW…NAAREGLGYV (452 aa)). Residues 275-276 (QN) and 306-309 (GGWS) contribute to the chitin site. The active-site Proton donor is E349. Chitin is bound by residues Y350, 422–425 (MSYD), and W582.

Belongs to the glycosyl hydrolase 18 family. In terms of assembly, semipurified toxin complex consists of at least YenA1-YenA2-YenB-YenC1-YenC2-Chi1-Chi2. The Yen-TC:K9 subcomplex is about 26 nm tall and 22 nm in diameter with 5-fold symmetry and 5 copies of YenA1, YenA2, Chi1 and Chi2; the chitinase subunits may be solvent accessible on the exterior the complex. The Yen-TC:K9 subcomplex has no insecticidal activity. The native complex with additional YenB, YenC1 and YenC2 subunits is 16 nm taller and is insecticidal; the toxicity-conferring subunits are present at about 1 copy each.

The protein resides in the secreted. It catalyses the reaction Random endo-hydrolysis of N-acetyl-beta-D-glucosaminide (1-&gt;4)-beta-linkages in chitin and chitodextrins.. With respect to regulation, toxin complex is secreted when grown at 25 degrees Celsius or less; at higher temperatures the proteins are present intracellularly but not secreted. In terms of biological role, part of an orally active toxin complex (TC) with strong insecticidal effects on larvae of the Coleoptera Costelytra zealandica, Acrossidius tasmania and Adoryphorus couloni and some Lepidoptera larvae. The TC has an endochitinase activity. This subunit might aid infection by degradation of the larval peritrophic membrane. This Yersinia entomophaga protein is Chitinase 2.